Here is a 349-residue protein sequence, read N- to C-terminus: Sesquiterpene synthase MAC_05714 (349 aa).

Mg(2+)-binding residues include D91 and D96. The short motif at 91–96 (DDLFVD) is the DDXXXD motif element. Residue R184 coordinates substrate. N230, S234, and E238 together coordinate Mg(2+).

Belongs to the terpene synthase family. It depends on Mg(2+) as a cofactor.

The enzyme catalyses (2E,6E)-farnesyl diphosphate + H2O = (+)-corvol ether B + diphosphate. It carries out the reaction (2E,6E)-farnesyl diphosphate + H2O = (+)-corvol ether A + diphosphate. Functionally, terpene synthase that catalyzes the conversion of (2E,6E)-farnesyl diphosphate (FPP) into sesquiterpenes which are important for fungi-environment interactions. Produces a mixture consisting of 8 sesquiterpenes including corvol ethers A and B, as well as traces of epizonarene, gamma-cadinene, delta-cadinene, alpha-cadinene, alpha-cadinol, and an unidentified sesquiterpene. Produces both corvol ether A and corvol ether B in similar concentrations. This Metarhizium acridum (strain CQMa 102) protein is Sesquiterpene synthase MAC_05714.